Reading from the N-terminus, the 382-residue chain is Chorismate synthase (382 aa).

NADP(+)-binding residues include R39 and R45. Residues 127–129 (RAS), 245–246 (QA), G290, 305–309 (KPIPT), and R331 each bind FMN.

Belongs to the chorismate synthase family. Homotetramer. Requires FMNH2 as cofactor.

It carries out the reaction 5-O-(1-carboxyvinyl)-3-phosphoshikimate = chorismate + phosphate. It participates in metabolic intermediate biosynthesis; chorismate biosynthesis; chorismate from D-erythrose 4-phosphate and phosphoenolpyruvate: step 7/7. Functionally, catalyzes the anti-1,4-elimination of the C-3 phosphate and the C-6 proR hydrogen from 5-enolpyruvylshikimate-3-phosphate (EPSP) to yield chorismate, which is the branch point compound that serves as the starting substrate for the three terminal pathways of aromatic amino acid biosynthesis. This reaction introduces a second double bond into the aromatic ring system. The protein is Chorismate synthase of Desulfitobacterium hafniense (strain DSM 10664 / DCB-2).